The sequence spans 670 residues: Probable leucine-rich repeat receptor-like protein kinase At1g68400 (670 aa).

An N-terminal signal peptide occupies residues 1 to 29 (MAKSSFFNKHLLLSLLILLQSCLLSSSSS). The Extracellular portion of the chain corresponds to 30-274 (TDSETLLNFK…KSNNTSRIST (245 aa)). N-linked (GlcNAc...) asparagine glycosylation is found at Asn-52, Asn-79, Asn-102, Asn-109, and Asn-112. LRR repeat units lie at residues 69–91 (RVTR…TSLT), 92–114 (SLRV…SNLT), 115–137 (ALKL…ITSL), 139–162 (RLYR…TDLT), 163–185 (HLLT…NLSD), and 186–207 (LQDF…LSQF). 3 N-linked (GlcNAc...) asparagine glycosylation sites follow: Asn-149, Asn-182, and Asn-190. The tract at residues 230–266 (SSDPTKPGRPDEAKASPLNKPETVPSSPTSIHGGDKS) is disordered. Polar residues predominate over residues 253 to 266 (VPSSPTSIHGGDKS). Asn-268 carries an N-linked (GlcNAc...) asparagine glycan. The chain crosses the membrane as a helical span at residues 275-295 (ISLIAIILGDFIILSFVSLLL). Over 296-670 (YYCFWRQYAV…EDTCGGTTSQ (375 aa)) the chain is Cytoplasmic. Residues 362–636 (RASAEMLGKG…GHVVKLIEDI (275 aa)) enclose the Protein kinase domain. Phosphoserine is present on Ser-364. ATP contacts are provided by residues 368 to 376 (LGKGGFGTA) and Lys-390. At Ser-443 the chain carries Phosphoserine. Thr-463 is modified (phosphothreonine). Asp-491 functions as the Proton acceptor in the catalytic mechanism. The residue at position 616 (Thr-616) is a Phosphothreonine.

The protein belongs to the protein kinase superfamily. Ser/Thr protein kinase family.

Its subcellular location is the cell membrane. The enzyme catalyses L-seryl-[protein] + ATP = O-phospho-L-seryl-[protein] + ADP + H(+). The catalysed reaction is L-threonyl-[protein] + ATP = O-phospho-L-threonyl-[protein] + ADP + H(+). This chain is Probable leucine-rich repeat receptor-like protein kinase At1g68400, found in Arabidopsis thaliana (Mouse-ear cress).